Here is a 1194-residue protein sequence, read N- to C-terminus: ATP-dependent RNA helicase DHX30 (1194 aa).

Positions 1-10 are enriched in basic and acidic residues; sequence MFSLDSFRKD. Positions 1–27 are disordered; sequence MFSLDSFRKDRAQHRQRQCKLPPPRLP. Serine 6 is modified (phosphoserine). One can recognise a DRBM domain in the interval 53-121; it reads PKNLLNSVIG…QAAAAACQLF (69 aa). Positions 150–199 are disordered; it reads ADSWWRPEPTMPPTSWRQLNPESIRPGGPGGLSRSLGREEEEDEEEELEE. Residues 188-199 show a composition bias toward acidic residues; that stretch reads EEEEDEEEELEE. 2 positions are modified to phosphoserine: serine 226 and serine 380. The Helicase ATP-binding domain occupies 444 to 612; the sequence is LNAIEQHPVV…FGGCPVIKVP (169 aa). 457–464 serves as a coordination point for ATP; the sequence is GDTGCGKT. A DEAH box motif is present at residues 559–562; that stretch reads DEVH. A Helicase C-terminal domain is found at 654 to 827; sequence LVTDLVLHID…NLVLQAKIHM (174 aa).

It belongs to the DEAD box helicase family. DEAH subfamily. As to quaternary structure, identified in a complex with TFAM and SSBP1. Interacts (via N-terminus) with ZC3HAV1 (via N-terminal domain) in an RNA-independent manner. Found in a complex with GRSF1, DDX28, FASTKD2 and FASTKD5.

The protein localises to the cytoplasm. Its subcellular location is the mitochondrion. It is found in the mitochondrion matrix. It localises to the mitochondrion nucleoid. It catalyses the reaction ATP + H2O = ADP + phosphate + H(+). In terms of biological role, RNA-dependent helicase. Plays an important role in the assembly of the mitochondrial large ribosomal subunit. Required for optimal function of the zinc-finger antiviral protein ZC3HAV1. Associates with mitochondrial DNA. Involved in nervous system development and differentiation through its involvement in the up-regulation of a number of genes which are required for neurogenesis, including GSC, NCAM1, neurogenin, and NEUROD. The sequence is that of ATP-dependent RNA helicase DHX30 (DHX30) from Pongo abelii (Sumatran orangutan).